The following is a 390-amino-acid chain: S-adenosylmethionine synthase 2 (390 aa).

Glu9 serves as a coordination point for Mg(2+). His15 contacts ATP. Position 43 (Glu43) interacts with K(+). 2 residues coordinate L-methionine: Glu56 and Gln99. ATP is bound by residues 167–169 (DGK), 235–238 (SGRF), Asp246, 252–253 (RK), Ala269, Lys273, and Lys277. L-methionine is bound at residue Asp246. Position 277 (Lys277) interacts with L-methionine.

Belongs to the AdoMet synthase family. As to quaternary structure, homotetramer. The cofactor is Mn(2+). Mg(2+) serves as cofactor. Co(2+) is required as a cofactor. Requires K(+) as cofactor.

The protein localises to the cytoplasm. The catalysed reaction is L-methionine + ATP + H2O = S-adenosyl-L-methionine + phosphate + diphosphate. Its pathway is amino-acid biosynthesis; S-adenosyl-L-methionine biosynthesis; S-adenosyl-L-methionine from L-methionine: step 1/1. Catalyzes the formation of S-adenosylmethionine from methionine and ATP. The reaction comprises two steps that are both catalyzed by the same enzyme: formation of S-adenosylmethionine (AdoMet) and triphosphate, and subsequent hydrolysis of the triphosphate. In Petunia hybrida (Petunia), this protein is S-adenosylmethionine synthase 2 (SAM2).